Consider the following 449-residue polypeptide: Bifunctional protein GlmU (449 aa).

Residues 1–226 (MNNIHAIILA…KFEVLGVNDK (226 aa)) form a pyrophosphorylase region. Residues 9 to 12 (LAAG), Lys23, Gln73, 78 to 79 (GT), 100 to 102 (YGD), Gly137, Glu151, Asn166, and Asn224 contribute to the UDP-N-acetyl-alpha-D-glucosamine site. A Mg(2+)-binding site is contributed by Asp102. Asn224 serves as a coordination point for Mg(2+). Residues 227-247 (VQLAELERLFQKDQAIQFMKQ) are linker. The tract at residues 248–449 (GLGLKDPTRF…QKNLKYRSKK (202 aa)) is N-acetyltransferase. Residues Arg330 and Lys348 each coordinate UDP-N-acetyl-alpha-D-glucosamine. Residue His360 is the Proton acceptor of the active site. UDP-N-acetyl-alpha-D-glucosamine-binding residues include Tyr363 and Asn374. Acetyl-CoA-binding positions include Ala377, 383–384 (NY), Ser402, Ala420, and Arg437.

The protein in the N-terminal section; belongs to the N-acetylglucosamine-1-phosphate uridyltransferase family. In the C-terminal section; belongs to the transferase hexapeptide repeat family. In terms of assembly, homotrimer. Mg(2+) is required as a cofactor.

It is found in the cytoplasm. The catalysed reaction is alpha-D-glucosamine 1-phosphate + acetyl-CoA = N-acetyl-alpha-D-glucosamine 1-phosphate + CoA + H(+). It carries out the reaction N-acetyl-alpha-D-glucosamine 1-phosphate + UTP + H(+) = UDP-N-acetyl-alpha-D-glucosamine + diphosphate. It participates in nucleotide-sugar biosynthesis; UDP-N-acetyl-alpha-D-glucosamine biosynthesis; N-acetyl-alpha-D-glucosamine 1-phosphate from alpha-D-glucosamine 6-phosphate (route II): step 2/2. The protein operates within nucleotide-sugar biosynthesis; UDP-N-acetyl-alpha-D-glucosamine biosynthesis; UDP-N-acetyl-alpha-D-glucosamine from N-acetyl-alpha-D-glucosamine 1-phosphate: step 1/1. It functions in the pathway bacterial outer membrane biogenesis; LPS lipid A biosynthesis. In terms of biological role, catalyzes the last two sequential reactions in the de novo biosynthetic pathway for UDP-N-acetylglucosamine (UDP-GlcNAc). The C-terminal domain catalyzes the transfer of acetyl group from acetyl coenzyme A to glucosamine-1-phosphate (GlcN-1-P) to produce N-acetylglucosamine-1-phosphate (GlcNAc-1-P), which is converted into UDP-GlcNAc by the transfer of uridine 5-monophosphate (from uridine 5-triphosphate), a reaction catalyzed by the N-terminal domain. In Vesicomyosocius okutanii subsp. Calyptogena okutanii (strain HA), this protein is Bifunctional protein GlmU.